A 482-amino-acid polypeptide reads, in one-letter code: Sugar transporter ERD6-like 16 (482 aa).

A run of 12 helical transmembrane segments spans residues Leu-42–Val-62, Leu-80–Met-100, Ser-117–Leu-137, Phe-142–Ile-162, Thr-173–Ile-193, Thr-197–Pro-217, Val-280–Phe-300, Leu-316–Ile-336, Leu-344–Leu-364, Gly-382–Met-402, Ile-413–Phe-433, and Gly-443–Val-463.

It belongs to the major facilitator superfamily. Sugar transporter (TC 2.A.1.1) family.

It localises to the membrane. Sugar transporter. This is Sugar transporter ERD6-like 16 from Arabidopsis thaliana (Mouse-ear cress).